Consider the following 211-residue polypeptide: Superoxide dismutase [Fe] (211 aa).

Fe cation-binding residues include H34, H85, D171, and H175.

Belongs to the iron/manganese superoxide dismutase family. It depends on Fe cation as a cofactor.

It catalyses the reaction 2 superoxide + 2 H(+) = H2O2 + O2. In terms of biological role, destroys superoxide anion radicals which are normally produced within the cells and which are toxic to biological systems. The chain is Superoxide dismutase [Fe] (sod) from Acidianus ambivalens (Desulfurolobus ambivalens).